The following is a 195-amino-acid chain: Phosphoheptose isomerase (195 aa).

Positions Val-36–Glu-195 constitute an SIS domain. Asn-51–Gly-53 serves as a coordination point for substrate. Residues His-60 and Glu-64 each coordinate Zn(2+). Substrate-binding positions include Glu-64, Asn-95 to Asp-96, Ser-121 to Ser-123, Ser-126, and Gln-173. Zn(2+) is bound by residues Gln-173 and His-181.

The protein belongs to the SIS family. GmhA subfamily. Requires Zn(2+) as cofactor.

It is found in the cytoplasm. The catalysed reaction is 2 D-sedoheptulose 7-phosphate = D-glycero-alpha-D-manno-heptose 7-phosphate + D-glycero-beta-D-manno-heptose 7-phosphate. It functions in the pathway carbohydrate biosynthesis; D-glycero-D-manno-heptose 7-phosphate biosynthesis; D-glycero-alpha-D-manno-heptose 7-phosphate and D-glycero-beta-D-manno-heptose 7-phosphate from sedoheptulose 7-phosphate: step 1/1. Its function is as follows. Catalyzes the isomerization of sedoheptulose 7-phosphate in D-glycero-D-manno-heptose 7-phosphate. This is Phosphoheptose isomerase from Leptospira borgpetersenii serovar Hardjo-bovis (strain JB197).